The sequence spans 61 residues: Large ribosomal subunit protein eL37 (61 aa).

Zn(2+) contacts are provided by cysteine 18, cysteine 21, cysteine 33, and cysteine 36. Residues 18 to 36 form a C4-type zinc finger; that stretch reads CRRCGRNAYNPTKKYCASC.

The protein belongs to the eukaryotic ribosomal protein eL37 family. It depends on Zn(2+) as a cofactor.

Binds to the 23S rRNA. The chain is Large ribosomal subunit protein eL37 from Methanosphaera stadtmanae (strain ATCC 43021 / DSM 3091 / JCM 11832 / MCB-3).